The following is a 229-amino-acid chain: Cytochrome c oxidase subunit 2 (229 aa).

At 1 to 26 the chain is on the mitochondrial intermembrane side; the sequence is MATWAQLNFQDAASPMMEQLHYFHDH. The helical transmembrane segment at 27-48 threads the bilayer; sequence TMMVLVIITIMVAYIMGTMFFN. At 49-62 the chain is on the mitochondrial matrix side; sequence KDVNRYLLDGQKIE. A helical membrane pass occupies residues 63–82; the sequence is TEWTIVPVFVLVIIAMPSLR. Topologically, residues 83–229 are mitochondrial intermembrane; that stretch reads LLYLLDEVNE…INWIQNMSEA (147 aa). Residues His-161, Cys-196, Glu-198, Cys-200, His-204, and Met-207 each coordinate Cu cation. Position 198 (Glu-198) interacts with Mg(2+).

It belongs to the cytochrome c oxidase subunit 2 family. As to quaternary structure, component of the cytochrome c oxidase (complex IV, CIV), a multisubunit enzyme composed of a catalytic core of 3 subunits and several supernumerary subunits. The complex exists as a monomer or a dimer and forms supercomplexes (SCs) in the inner mitochondrial membrane with ubiquinol-cytochrome c oxidoreductase (cytochrome b-c1 complex, complex III, CIII). Cu cation is required as a cofactor.

It is found in the mitochondrion inner membrane. The enzyme catalyses 4 Fe(II)-[cytochrome c] + O2 + 8 H(+)(in) = 4 Fe(III)-[cytochrome c] + 2 H2O + 4 H(+)(out). Its function is as follows. Component of the cytochrome c oxidase, the last enzyme in the mitochondrial electron transport chain which drives oxidative phosphorylation. The respiratory chain contains 3 multisubunit complexes succinate dehydrogenase (complex II, CII), ubiquinol-cytochrome c oxidoreductase (cytochrome b-c1 complex, complex III, CIII) and cytochrome c oxidase (complex IV, CIV), that cooperate to transfer electrons derived from NADH and succinate to molecular oxygen, creating an electrochemical gradient over the inner membrane that drives transmembrane transport and the ATP synthase. Cytochrome c oxidase is the component of the respiratory chain that catalyzes the reduction of oxygen to water. Electrons originating from reduced cytochrome c in the intermembrane space (IMS) are transferred via the dinuclear copper A center (CU(A)) of subunit 2 and heme A of subunit 1 to the active site in subunit 1, a binuclear center (BNC) formed by heme A3 and copper B (CU(B)). The BNC reduces molecular oxygen to 2 water molecules using 4 electrons from cytochrome c in the IMS and 4 protons from the mitochondrial matrix. The chain is Cytochrome c oxidase subunit 2 (COII) from Sympetrum striolatum (Common darter dragonfly).